The chain runs to 211 residues: Large ribosomal subunit protein uL3 (211 aa).

Residues 122–157 (NQKRNNFGRGPMSHGSKNHRAPGSIGAGTTPGRVYP) form a disordered region.

It belongs to the universal ribosomal protein uL3 family. As to quaternary structure, part of the 50S ribosomal subunit. Forms a cluster with proteins L14 and L19.

One of the primary rRNA binding proteins, it binds directly near the 3'-end of the 23S rRNA, where it nucleates assembly of the 50S subunit. This chain is Large ribosomal subunit protein uL3, found in Trichormus variabilis (strain ATCC 29413 / PCC 7937) (Anabaena variabilis).